Here is a 607-residue protein sequence, read N- to C-terminus: Tyrosine-protein kinase RYK (607 aa).

The tract at residues 1–20 (MRGAARLGRPGRSCLPGARG) is disordered. An N-terminal signal peptide occupies residues 1-25 (MRGAARLGRPGRSCLPGARGLRAPP). Over 26–227 (PPPLLLLLAL…VHAAPTTSTR (202 aa)) the chain is Extracellular. Residues 66-194 (LYLSEDEVRR…VLNFKRRKMC (129 aa)) form the WIF domain. N-linked (GlcNAc...) asparagine glycans are attached at residues Asn139, Asn174, Asn178, Asn182, and Asn209. Residues Cys159 and Cys194 are joined by a disulfide bond. A helical membrane pass occupies residues 228-248 (VFYISVGVCCAVIFLVAIILA). The Cytoplasmic segment spans residues 249–607 (VLHLHSMKRI…EFHAALGAYV (359 aa)). Positions 266 to 282 (ASSSSQGLSQPSTQTTQ) are enriched in low complexity. The tract at residues 266 to 290 (ASSSSQGLSQPSTQTTQYLRADTPN) is disordered. Residues 330–603 (ITLKDVLQEG…QCLTEFHAAL (274 aa)) enclose the Protein kinase domain. ATP-binding positions include 336–344 (LQEGTFGRI) and Lys364. Asp465 (proton acceptor) is an active-site residue. The residue at position 495 (Tyr495) is a Phosphotyrosine; by autocatalysis.

It belongs to the protein kinase superfamily. Tyr protein kinase family. In terms of assembly, interacts with DVL1 (via PDZ domain). Post-translationally, proteolytically cleaved, in part by presenilin, in response to WNT3 stimulation. Cleavage occurs during neuronal differentiation. In terms of tissue distribution, observed in all the tissues examined.

The protein localises to the membrane. It is found in the nucleus. The protein resides in the cytoplasm. The enzyme catalyses L-tyrosyl-[protein] + ATP = O-phospho-L-tyrosyl-[protein] + ADP + H(+). May be a coreceptor along with FZD8 of Wnt proteins, such as WNT1, WNT3, WNT3A and WNT5A. Involved in neuron differentiation, axon guidance, corpus callosum establishment and neurite outgrowth. In response to WNT3 stimulation, receptor C-terminal cleavage occurs in its transmembrane region and allows the C-terminal intracellular product to translocate from the cytoplasm to the nucleus where it plays a crucial role in neuronal development. This is Tyrosine-protein kinase RYK from Homo sapiens (Human).